Consider the following 409-residue polypeptide: Peptidase T (409 aa).

Position 78 (histidine 78) interacts with Zn(2+). The active site involves aspartate 80. Aspartate 140 is a Zn(2+) binding site. The active-site Proton acceptor is glutamate 173. Residues glutamate 174, aspartate 196, and histidine 379 each contribute to the Zn(2+) site.

It belongs to the peptidase M20B family. It depends on Zn(2+) as a cofactor.

It localises to the cytoplasm. The catalysed reaction is Release of the N-terminal residue from a tripeptide.. In terms of biological role, cleaves the N-terminal amino acid of tripeptides. In Salmonella paratyphi C (strain RKS4594), this protein is Peptidase T.